We begin with the raw amino-acid sequence, 706 residues long: MDAHIANETKHLLVHGNSKTRALVHIIVPDACLKKAGVDPVKLSDRHRASPSAAPVFRVFAQTRYHATGECSLWRTVFAGYVPSGAIVSALVPTVPADHPRLFQSTPDSGGLFVSLEIECDADGRFDAFTLVALRVDIADDPRTTEVLFTYDELLPPGTRYGADSKRVALLCRQFVAYVNSHPTVSQSAVTAASHIEAAVAEDVKSASGPQVSYGARIDPAEYLFSGGGFDNHQALARLEDDDKEIMSLIRRASEVIAKRNPVRVLSNPEVNGDAHRRQCVASGLRQGARGAHASDSHARVGFNSSIHDATALLLGLEPPDSGRFVNSGPQRHLPPQGPRSPASRDCQSGMLDDVLLLTPENSNPLTPLDWLDVGHAAVAGGDTPRDVWRRRPISLVARKHYGTCETFVVVSYENSTAWGGRRARDEHLAGSINPPVMQACVAAGVDHPRNLPPETRGELIAKFPMLTVPLGDTPPPVAAFDAAAELALIDHFRGACVSALLKAISERLRAEPRMSQLIEYDIPNNNRDCIISVAQRAPELLEAVALAIQNVTVTEFCNSALMLSALSHLNILSGNKRGRLPYHRSWLPSLAGGADAFLFDYYSSGGEVVKVSPVPLAILVTATRTGQHSCRFARGAPDSSSKTYERYLPGECYAYICVGLNRSFEALVVLPGGFACRASAARKLAWPAHLVEPILERYCWTIPSH.

Residues D321 to C347 are disordered.

Belongs to the herpesviridae CVC1 protein family. Interacts (via C-terminus) with capsid vertex component 2/CVC2.

It is found in the virion. The protein localises to the host nucleus. In terms of biological role, capsid vertex-specific component that plays a role during viral DNA encapsidation, assuring correct genome cleavage and presumably stabilizing capsids that contain full-length viral genomes. This Equus caballus (Horse) protein is Capsid vertex component 1.